The sequence spans 132 residues: Small ribosomal subunit protein uS8 (132 aa).

Belongs to the universal ribosomal protein uS8 family. Part of the 30S ribosomal subunit. Contacts proteins S5 and S12.

One of the primary rRNA binding proteins, it binds directly to 16S rRNA central domain where it helps coordinate assembly of the platform of the 30S subunit. The polypeptide is Small ribosomal subunit protein uS8 (Brucella anthropi (strain ATCC 49188 / DSM 6882 / CCUG 24695 / JCM 21032 / LMG 3331 / NBRC 15819 / NCTC 12168 / Alc 37) (Ochrobactrum anthropi)).